A 306-amino-acid polypeptide reads, in one-letter code: Apolipoprotein E (306 aa).

The signal sequence occupies residues 1-18 (MKVLWAVLVVTLLAGCQA). 8 consecutive repeat copies span residues 81–102 (VLMEDTMKEVKAYKSELEQELG), 103–124 (PMAEDTKARLSKELQAAQARLG), 125–146 (ADMEEVRNRLTQYRSEVQTMLG), 147–168 (QSAEELRARLASHLRKLRKRLL), 169–190 (RDAEDLQKRLAVYKAGAQEGAE), 191–212 (RGVSAIRERLGSLVEQGRLRAA), 213–230 (QTSQPLRERAQAWGERLR), and 231–252 (GRLEEVGGQARDRLDVVREQME). Positions 81-252 (VLMEDTMKEV…RLDVVREQME (172 aa)) are 8 X 22 AA approximate tandem repeats. Met-144 bears the Methionine sulfoxide mark. Ser-148 carries the phosphoserine modification. Positions 159–169 (HLRKLRKRLLR) are LDL and other lipoprotein receptors binding. Residue 163 to 166 (LRKR) coordinates heparin. The segment at 211-280 (AAQTSQPLRE…GWFEPVVEDM (70 aa)) is lipid-binding and lipoprotein association. 226–233 (GERLRGRL) is a heparin binding site. The interval 268 to 280 (RLKGWFEPVVEDM) is specificity for association with VLDL.

The protein belongs to the apolipoprotein A1/A4/E family. In terms of assembly, homotetramer. May interact with ABCA1; functionally associated with ABCA1 in the biogenesis of HDLs. May interact with APP/A4 amyloid-beta peptide; the interaction is extremely stable in vitro but its physiological significance is unclear. May interact with MAPT. May interact with MAP2. In the cerebrospinal fluid, interacts with secreted SORL1. Interacts with PMEL; this allows the loading of PMEL luminal fragment on ILVs to induce fibril nucleation. Post-translationally, APOE exists as multiple glycosylated and sialylated glycoforms within cells and in plasma. The extent of glycosylation and sialylation are tissue and context specific. In terms of processing, glycated in plasma VLDL. Phosphorylated by FAM20C in the extracellular medium.

The protein resides in the secreted. It localises to the extracellular space. Its subcellular location is the extracellular matrix. It is found in the extracellular vesicle. The protein localises to the endosome. The protein resides in the multivesicular body. APOE is an apolipoprotein, a protein associating with lipid particles, that mainly functions in lipoprotein-mediated lipid transport between organs via the plasma and interstitial fluids. APOE is a core component of plasma lipoproteins and is involved in their production, conversion and clearance. Apolipoproteins are amphipathic molecules that interact both with lipids of the lipoprotein particle core and the aqueous environment of the plasma. As such, APOE associates with chylomicrons, chylomicron remnants, very low density lipoproteins (VLDL) and intermediate density lipoproteins (IDL) but shows a preferential binding to high-density lipoproteins (HDL). It also binds a wide range of cellular receptors including the LDL receptor/LDLR, the LDL receptor-related proteins LRP1, LRP2 and LRP8 and the very low-density lipoprotein receptor/VLDLR that mediate the cellular uptake of the APOE-containing lipoprotein particles. Finally, APOE also has a heparin-binding activity and binds heparan-sulfate proteoglycans on the surface of cells, a property that supports the capture and the receptor-mediated uptake of APOE-containing lipoproteins by cells. A main function of APOE is to mediate lipoprotein clearance through the uptake of chylomicrons, VLDLs, and HDLs by hepatocytes. APOE is also involved in the biosynthesis by the liver of VLDLs as well as their uptake by peripheral tissues ensuring the delivery of triglycerides and energy storage in muscle, heart and adipose tissues. By participating in the lipoprotein-mediated distribution of lipids among tissues, APOE plays a critical role in plasma and tissues lipid homeostasis. APOE is also involved in two steps of reverse cholesterol transport, the HDLs-mediated transport of cholesterol from peripheral tissues to the liver, and thereby plays an important role in cholesterol homeostasis. First, it is functionally associated with ABCA1 in the biogenesis of HDLs in tissues. Second, it is enriched in circulating HDLs and mediates their uptake by hepatocytes. APOE also plays an important role in lipid transport in the central nervous system, regulating neuron survival and sprouting. The protein is Apolipoprotein E (APOE) of Hystrix brachyura (Malayan porcupine).